A 180-amino-acid chain; its full sequence is Translation initiation factor IF-3 (180 aa).

Belongs to the IF-3 family. As to quaternary structure, monomer.

The protein resides in the cytoplasm. Functionally, IF-3 binds to the 30S ribosomal subunit and shifts the equilibrium between 70S ribosomes and their 50S and 30S subunits in favor of the free subunits, thus enhancing the availability of 30S subunits on which protein synthesis initiation begins. This chain is Translation initiation factor IF-3, found in Salmonella typhi.